A 429-amino-acid polypeptide reads, in one-letter code: UDP-N-acetylglucosamine 1-carboxyvinyltransferase (429 aa).

22 to 23 (KN) is a phosphoenolpyruvate binding site. Residue Arg-102 coordinates UDP-N-acetyl-alpha-D-glucosamine. The Proton donor role is filled by Cys-126. The residue at position 126 (Cys-126) is a 2-(S-cysteinyl)pyruvic acid O-phosphothioketal. UDP-N-acetyl-alpha-D-glucosamine-binding positions include 131 to 135 (RPVDL), Asp-316, and Ile-338.

It belongs to the EPSP synthase family. MurA subfamily.

Its subcellular location is the cytoplasm. The catalysed reaction is phosphoenolpyruvate + UDP-N-acetyl-alpha-D-glucosamine = UDP-N-acetyl-3-O-(1-carboxyvinyl)-alpha-D-glucosamine + phosphate. The protein operates within cell wall biogenesis; peptidoglycan biosynthesis. Functionally, cell wall formation. Adds enolpyruvyl to UDP-N-acetylglucosamine. This is UDP-N-acetylglucosamine 1-carboxyvinyltransferase from Rhodopseudomonas palustris (strain BisB5).